The primary structure comprises 82 residues: Putative membrane protein insertion efficiency factor (82 aa).

This sequence belongs to the UPF0161 family.

Its subcellular location is the cell inner membrane. Its function is as follows. Could be involved in insertion of integral membrane proteins into the membrane. This is Putative membrane protein insertion efficiency factor from Rickettsia peacockii (strain Rustic).